Reading from the N-terminus, the 416-residue chain is Basic salivary proline-rich protein 2 (416 aa).

A signal peptide spans 1 to 16 (MLLILLSVALLALSSA). A Pyrrolidone carboxylic acid modification is found at Q17. Polar residues predominate over residues 19–28 (LNEDVSQEES). The segment at 19–416 (LNEDVSQEES…QGGRPSRPPQ (398 aa)) is disordered. S24 carries the post-translational modification Phosphoserine. The segment covering 34–47 (GNPQGAPPQGGNKP) has biased composition (low complexity). 2 stretches are compositionally biased toward pro residues: residues 48–104 (QGPP…PPPQ) and 112–165 (RSPP…PPPQ). S52 carries the post-translational modification Phosphoserine. 15 repeat units span residues 53–72 (PPGK…QGPP), 74–93 (PPGK…QGPP), 94–113 (PPGK…SPRS), 114–133 (PPGK…QGPP), 135–154 (PPGK…QGPP), 155–174 (PPGK…RSSR), 176–195 (PPGK…QGPP), 197–216 (PPGK…QGPP), 217–236 (PPGK…QSAR), 238–257 (PPGK…QGPP), 259–278 (PPGK…QGPP), 279–298 (PPGK…RSSR), 300–319 (PPGK…QGPP), 321–340 (PPGK…QGPP), and 341–360 (PPGK…RSAR). Positions 53–360 (PPGKPQGPPP…QGGSKSRSAR (308 aa)) are 15 X 20 AA approximate tandem repeats of P-P-G-K-P-Q-G-P-P-P-Q-G-[GD]-[NKS]-[KSQ]-[PRS]-[QRS] [GPS]-[PSAR]-[PSR]. An N-linked (GlcNAc...) asparagine glycan is attached at N168. Pro residues predominate over residues 177–227 (PGKPQGPPPQGGNQPQGPPPPPGKPQGPPPQGGNKPQGPPPPGKPQGPPPQ). Residue N230 is glycosylated (N-linked (GlcNAc...) asparagine). Residue S232 is glycosylated (O-linked (Hex) serine). Residues 239 to 289 (PGKPQGPPPQGGNQPQGPPPPPGKPQGPPPQGGNKPQGPPPPGKPQGPPPQ) are compositionally biased toward pro residues. A glycan (N-linked (GlcNAc...) asparagine) is linked at N272. Residues 290–300 (GGSKSRSSRSP) show a composition bias toward low complexity. Pro residues-rich tracts occupy residues 301 to 351 (PGKP…PPPQ) and 378 to 416 (QGPP…RPPQ).

Post-translationally, N- and O-glycosylated. In head and neck cancer patients, O-glycosylated with glucosylgalactosyl carbohydrate moiety. This modification would require prior hydroxylation on the lysine residue. Proteolytically cleaved at the tripeptide Xaa-Pro-Gln, where Xaa in the P(3) position is mostly lysine. The endoprotease may be of microbial origin. In terms of processing, pyroglutamate formation occurs on terminal Gln residues of cleaved peptides. Pyroglutamate formation found on at least Gln-398 and Gln-400.

The protein resides in the secreted. The chain is Basic salivary proline-rich protein 2 (PRB2) from Homo sapiens (Human).